A 147-amino-acid chain; its full sequence is Large ribosomal subunit protein bL9 (147 aa).

Belongs to the bacterial ribosomal protein bL9 family.

In terms of biological role, binds to the 23S rRNA. This chain is Large ribosomal subunit protein bL9, found in Clostridium kluyveri (strain NBRC 12016).